The chain runs to 251 residues: CDP-diacylglycerol pyrophosphatase (251 aa).

Residues 4–24 (AGLLFLVMIVIAVVASGIGYW) traverse the membrane as a helical segment.

The protein belongs to the Cdh family.

It is found in the cell inner membrane. The catalysed reaction is a CDP-1,2-diacyl-sn-glycerol + H2O = a 1,2-diacyl-sn-glycero-3-phosphate + CMP + 2 H(+). It participates in phospholipid metabolism; CDP-diacylglycerol degradation; phosphatidate from CDP-diacylglycerol: step 1/1. The protein is CDP-diacylglycerol pyrophosphatase of Escherichia coli O8 (strain IAI1).